Here is a 199-residue protein sequence, read N- to C-terminus: Acireductone dioxygenase 2 (199 aa).

Residues His-98, His-100, Glu-104, and His-143 each coordinate Fe(2+). 4 residues coordinate Ni(2+): His-98, His-100, Glu-104, and His-143.

This sequence belongs to the acireductone dioxygenase (ARD) family. Fe(2+) is required as a cofactor. It depends on Ni(2+) as a cofactor.

Its subcellular location is the cytoplasm. It localises to the nucleus. The catalysed reaction is 1,2-dihydroxy-5-(methylsulfanyl)pent-1-en-3-one + O2 = 4-methylsulfanyl-2-oxobutanoate + formate + 2 H(+). It catalyses the reaction 1,2-dihydroxy-5-(methylsulfanyl)pent-1-en-3-one + O2 = 3-(methylsulfanyl)propanoate + CO + formate + 2 H(+). It participates in amino-acid biosynthesis; L-methionine biosynthesis via salvage pathway; L-methionine from S-methyl-5-thio-alpha-D-ribose 1-phosphate: step 5/6. Functionally, catalyzes 2 different reactions between oxygen and the acireductone 1,2-dihydroxy-3-keto-5-methylthiopentene (DHK-MTPene) depending upon the metal bound in the active site. Fe-containing acireductone dioxygenase (Fe-ARD) produces formate and 2-keto-4-methylthiobutyrate (KMTB), the alpha-ketoacid precursor of methionine in the methionine recycle pathway. Ni-containing acireductone dioxygenase (Ni-ARD) produces methylthiopropionate, carbon monoxide and formate, and does not lie on the methionine recycle pathway. The protein is Acireductone dioxygenase 2 of Vitis vinifera (Grape).